The chain runs to 249 residues: Diaminopimelate epimerase (249 aa).

Substrate contacts are provided by Asn11 and Asn60. The active-site Proton donor is Cys69. Residues 70-71 (GN), Asn164, and 182-183 (ER) contribute to the substrate site. Residue Cys192 is the Proton acceptor of the active site. 193 to 194 (GT) serves as a coordination point for substrate.

This sequence belongs to the diaminopimelate epimerase family. Homodimer.

It is found in the cytoplasm. It catalyses the reaction (2S,6S)-2,6-diaminopimelate = meso-2,6-diaminopimelate. It participates in amino-acid biosynthesis; L-lysine biosynthesis via DAP pathway; DL-2,6-diaminopimelate from LL-2,6-diaminopimelate: step 1/1. Functionally, catalyzes the stereoinversion of LL-2,6-diaminopimelate (L,L-DAP) to meso-diaminopimelate (meso-DAP), a precursor of L-lysine and an essential component of the bacterial peptidoglycan. This chain is Diaminopimelate epimerase, found in Campylobacter jejuni subsp. doylei (strain ATCC BAA-1458 / RM4099 / 269.97).